A 937-amino-acid chain; its full sequence is Chaperone protein ClpD2, chloroplastic (937 aa).

Residues 1–80 (MEACCCSSSS…FERFTERAVK (80 aa)) constitute a chloroplast transit peptide. 2 repeat regions span residues 81 to 137 (AVVF…VGKE) and 152 to 217 (FSGA…VQGE). Positions 81-217 (AVVFSQREAR…KQALTRVQGE (137 aa)) constitute a Clp R domain. Residues 259–513 (LALFCLDLTM…RMESFKRKKE (255 aa)) form an i region. ATP is bound by residues 304–311 (GEAGVGKT) and 658–665 (GPTGVGKT). The interval 584 to 775 (VGSEEIARVT…LIVMTSNVGS (192 aa)) is II.

It belongs to the ClpA/ClpB family. ClpD subfamily. In terms of tissue distribution, highly expressed in stems, culms and leaves.

It is found in the plastid. It localises to the chloroplast. Its function is as follows. Molecular chaperone that may interact with a ClpP-like protease involved in degradation of denatured proteins in the chloroplast. This is Chaperone protein ClpD2, chloroplastic (CLPD2) from Oryza sativa subsp. japonica (Rice).